The primary structure comprises 115 residues: Virulence-associated protein A' (115 aa).

Positions 16-70 (IKSDLDGLGINITEAAKALDVTRAALSEIINGKRGISAKMAWKLSKAFTNSDPEF) constitute an HTH cro/C1-type domain. Positions 27–46 (ITEAAKALDVTRAALSEIIN) form a DNA-binding region, H-T-H motif.

This sequence belongs to the VapA/VapI family.

This Dichelobacter nodosus (Bacteroides nodosus) protein is Virulence-associated protein A' (vapA').